The sequence spans 1448 residues: DNA primase TraC (1448 aa).

Composition is skewed to basic and acidic residues over residues 844-856 (ARVQ…RDPN), 863-872 (SAAKEARKTA), and 882-898 (DAQR…RDRQ). 2 disordered regions span residues 844–915 (ARVQ…INVP) and 952–982 (QGAA…QQAQ). Positions 964–982 (AQPAPEAQGEAQKPAQQAQ) are enriched in low complexity. A Toprim domain is found at 1237–1325 (PALVISEGYA…GKAIFPIFAP (89 aa)). The interval 1414-1448 (ISQVQRDEQQHQEQKHVEKKQQQIEQRPRRAARIG) is disordered. The segment covering 1418–1441 (QRDEQQHQEQKHVEKKQQQIEQRP) has biased composition (basic and acidic residues).

In terms of biological role, required for autonomous replication in E.coli. Transferred into the recipient cell during bacterial conjugation. Catalyzes the synthesis of short oligoribonucleotide primers with CpA or pCpA at their 5'-termini on a single-stranded template DNA. This is DNA primase TraC (traC) from Escherichia coli.